A 1148-amino-acid chain; its full sequence is Alpha-mannosidase 2 (1148 aa).

Residues 1 to 5 are Cytoplasmic-facing; the sequence is MKLSR. The helical; Signal-anchor for type II membrane protein transmembrane segment at 6 to 26 threads the bilayer; that stretch reads QFTVFGSAIFCVVIFSLYLML. Residues 27-1148 lie on the Lumenal side of the membrane; that stretch reads DRGHLDYPRG…EISTSRIRLR (1122 aa). 2 positions are modified to phosphoserine: Ser80 and Ser82. An N-linked (GlcNAc...) asparagine glycan is attached at Asn93. Residues His174, Asp176, Asp288, and His568 each coordinate Zn(2+). The Nucleophile role is filled by Asp288. The tract at residues 1121 to 1148 is disordered; that stretch reads MHSPPDAQNTSEVSLSPMEISTSRIRLR.

This sequence belongs to the glycosyl hydrolase 38 family. Homodimer; disulfide-linked. The cofactor is Zn(2+). Post-translationally, glycosylated. As to expression, liver.

The protein resides in the golgi apparatus membrane. The enzyme catalyses N(4)-{beta-D-GlcNAc-(1-&gt;2)-alpha-D-Man-(1-&gt;3)-[alpha-D-Man-(1-&gt;3)-[alpha-D-Man-(1-&gt;6)]-alpha-D-Man-(1-&gt;6)]-beta-D-Man-(1-&gt;4)-beta-D-GlcNAc-(1-&gt;4)-beta-D-GlcNAc}-L-asparaginyl-[protein] + 2 H2O = 2 alpha-D-mannopyranose + an N(4)-{beta-D-GlcNAc-(1-&gt;2)-alpha-D-Man-(1-&gt;3)-[alpha-D-Man-(1-&gt;6)]-beta-D-Man-(1-&gt;4)-beta-D-GlcNAc-(1-&gt;4)-beta-D-GlcNAc}-L-asparaginyl-[protein]. It participates in protein modification; protein glycosylation. Its activity is regulated as follows. Inhibited by swainsonine. Catalyzes the first committed step in the biosynthesis of complex N-glycans. It controls conversion of high mannose to complex N-glycans; the final hydrolytic step in the N-glycan maturation pathway. This chain is Alpha-mannosidase 2 (Man2a1), found in Rattus norvegicus (Rat).